The sequence spans 117 residues: UPF0342 protein LBUL_1430 (117 aa).

This sequence belongs to the UPF0342 family.

This chain is UPF0342 protein LBUL_1430, found in Lactobacillus delbrueckii subsp. bulgaricus (strain ATCC BAA-365 / Lb-18).